A 619-amino-acid chain; its full sequence is Hypermethylated in cancer 2 protein (619 aa).

Positions 46-109 (CDVIIMVENS…IYTGKLLPSD (64 aa)) constitute a BTB domain. Residues Ser-166, Ser-169, and Ser-197 each carry the phosphoserine modification. Disordered regions lie at residues 180-293 (DVRK…VGNS) and 307-426 (MDVE…GHTG). Over residues 214 to 228 (LGLGGPAGGEMGLGG) the composition is skewed to gly residues. Residues 247 to 249 (DLS) form a binding to CtBP region. Positions 281–293 (APTSTSALPVGNS) are enriched in polar residues. Basic and acidic residues predominate over residues 337–357 (KKDWNKKEPVAGSPFDRRETG). Phosphoserine is present on residues Ser-349 and Ser-416. C2H2-type zinc fingers lie at residues 446–468 (YVCIPCAKGFPSSEQLNAHVETH), 509–531 (FKCSVCEKTYKDPATLRQHEKTH), 537–559 (FPCNICGKMFTQRGTMTRHMRSH), 565–587 (FACDECGMRFTRQYRLTEHMRVH), and 593–615 (YECQLCGGKFTQQRNLISHLRMH).

Belongs to the krueppel C2H2-type zinc-finger protein family. Hic subfamily. In terms of assembly, self-associates. Interacts with HIC1.

Its subcellular location is the nucleus. Its function is as follows. Transcriptional repressor. This Mus musculus (Mouse) protein is Hypermethylated in cancer 2 protein (Hic2).